The following is a 493-amino-acid chain: Endoglucanase 23 (493 aa).

Residues 1–23 form the signal peptide; sequence MKASIYLVTVFILLLLLLPTAIP. The Nucleophile role is filled by aspartate 78. A glycan (N-linked (GlcNAc...) asparagine) is linked at asparagine 297. The active site involves histidine 410. An N-linked (GlcNAc...) asparagine glycan is attached at asparagine 465. The active site involves glutamate 470.

This sequence belongs to the glycosyl hydrolase 9 (cellulase E) family.

Its subcellular location is the secreted. It catalyses the reaction Endohydrolysis of (1-&gt;4)-beta-D-glucosidic linkages in cellulose, lichenin and cereal beta-D-glucans.. This Arabidopsis thaliana (Mouse-ear cress) protein is Endoglucanase 23.